The following is a 211-amino-acid chain: MPVKIIDHVYAQYLLTQLRNRNTKGIDFRKGLVRLGRIVGYELVRYFPTREVEVETPLGKAVGIEILGLDKVIIVQILRAAMPFVEGLLKAFPQARLGVIAARRKEEGGVVDVEVFYSKIPTVEREDIVIVADPMLATGITMTRAIEEVYRVGQPGRLIVVSVIATPVGIERVLSKYPETEIFVVAIDPTLNDKAFIVPGLGDAGDRAFST.

GTP is bound at residue 30–34; sequence KGLVR. Residues R79, R104, and 133–141 each bind 5-phospho-alpha-D-ribose 1-diphosphate; that span reads DPMLATGIT. Uracil is bound by residues I197 and 202–204; that span reads GDA. D203 provides a ligand contact to 5-phospho-alpha-D-ribose 1-diphosphate.

This sequence belongs to the UPRTase family. Mg(2+) is required as a cofactor.

The enzyme catalyses UMP + diphosphate = 5-phospho-alpha-D-ribose 1-diphosphate + uracil. Its pathway is pyrimidine metabolism; UMP biosynthesis via salvage pathway; UMP from uracil: step 1/1. Allosterically activated by GTP. In terms of biological role, catalyzes the conversion of uracil and 5-phospho-alpha-D-ribose 1-diphosphate (PRPP) to UMP and diphosphate. The sequence is that of Uracil phosphoribosyltransferase from Pyrobaculum islandicum (strain DSM 4184 / JCM 9189 / GEO3).